Reading from the N-terminus, the 199-residue chain is TATA-box-binding protein (199 aa).

Repeat copies occupy residues 10 to 86 (IENI…VKLL) and 101 to 177 (IQNI…YNQL).

It belongs to the TBP family.

General factor that plays a role in the activation of archaeal genes transcribed by RNA polymerase. Binds specifically to the TATA box promoter element which lies close to the position of transcription initiation. The chain is TATA-box-binding protein from Pyrobaculum aerophilum (strain ATCC 51768 / DSM 7523 / JCM 9630 / CIP 104966 / NBRC 100827 / IM2).